We begin with the raw amino-acid sequence, 404 residues long: Probable tRNA sulfurtransferase (404 aa).

The region spanning 60-165 (EEVIPKLSKV…KDAAYLSYET (106 aa)) is the THUMP domain. ATP is bound by residues 183 to 184 (ML), 208 to 209 (HF), Arg-265, Gly-287, and Gln-296.

This sequence belongs to the ThiI family.

The protein resides in the cytoplasm. It carries out the reaction [ThiI sulfur-carrier protein]-S-sulfanyl-L-cysteine + a uridine in tRNA + 2 reduced [2Fe-2S]-[ferredoxin] + ATP + H(+) = [ThiI sulfur-carrier protein]-L-cysteine + a 4-thiouridine in tRNA + 2 oxidized [2Fe-2S]-[ferredoxin] + AMP + diphosphate. The catalysed reaction is [ThiS sulfur-carrier protein]-C-terminal Gly-Gly-AMP + S-sulfanyl-L-cysteinyl-[cysteine desulfurase] + AH2 = [ThiS sulfur-carrier protein]-C-terminal-Gly-aminoethanethioate + L-cysteinyl-[cysteine desulfurase] + A + AMP + 2 H(+). The protein operates within cofactor biosynthesis; thiamine diphosphate biosynthesis. Its function is as follows. Catalyzes the ATP-dependent transfer of a sulfur to tRNA to produce 4-thiouridine in position 8 of tRNAs, which functions as a near-UV photosensor. Also catalyzes the transfer of sulfur to the sulfur carrier protein ThiS, forming ThiS-thiocarboxylate. This is a step in the synthesis of thiazole, in the thiamine biosynthesis pathway. The sulfur is donated as persulfide by IscS. The polypeptide is Probable tRNA sulfurtransferase (Enterococcus faecalis (strain ATCC 700802 / V583)).